The following is a 576-amino-acid chain: MNIQAILSEKVSQALIAAGAPADSEAHIRQSAKAQFGDYQANGVMAAAKKVGMPPRQLAEKVVNLLNLQGIASKVEIAGPGFINIFLDKAWIAANIETALKDEKLGVTPAKPQTIVVDYSAPNVAKQMHVGHLRSTIIGDAAVRTLEFLGHKVIRANHVGDWGTQFGMLIAYLEKVQNENASDMALSDLEAFYREAKKHYDEDEEFAIRARGYVVKLQGGDEYCRTMWRKLVDITMAQNQQTYDRLNVTLTKDSVMGESLYNDLLPSIVADLKQQGLAVESDGATVVYLDEYKNKEGEPMGVIIQKQDGGYLYTTTDIACAKYRYETLHADRILYYIDSRQHQHLMQAWTIVRKAGYVPESVSLEHHMFGMMLGKDSKPFKTRAGGTVRLTDLLDEAIERANTLIREKNPDMPEDELKKVVSAVGIGAVKYADLSKSRTTDYIFDWDNMLAFEGNTAPYMQYAYTRVASIFKRAEIDESSLTLPVILNEDREQTLATRLLQFEETITTVAREGTPHVMCAYLYDLAGLFSCFYEHCQILNAESEELRQSRLKLALLTAKTLKQGLNTLGIETVERM.

The 'HIGH' region signature appears at 122-132 (PNVAKQMHVGH).

Belongs to the class-I aminoacyl-tRNA synthetase family. Monomer.

It localises to the cytoplasm. It catalyses the reaction tRNA(Arg) + L-arginine + ATP = L-arginyl-tRNA(Arg) + AMP + diphosphate. The chain is Arginine--tRNA ligase from Photorhabdus laumondii subsp. laumondii (strain DSM 15139 / CIP 105565 / TT01) (Photorhabdus luminescens subsp. laumondii).